We begin with the raw amino-acid sequence, 236 residues long: Class B acid phosphatase (236 aa).

An N-terminal signal peptide occupies residues M1 to A22. The active-site Nucleophile is D70. Mg(2+) is bound by residues D70 and D72. D72 (proton donor) is an active-site residue. Residues T138 to G139 and K176 contribute to the substrate site. D191 is a Mg(2+) binding site.

It belongs to the class B bacterial acid phosphatase family. In terms of assembly, homotetramer. The cofactor is Mg(2+).

The protein resides in the periplasm. The enzyme catalyses a phosphate monoester + H2O = an alcohol + phosphate. In terms of biological role, dephosphorylates several organic phosphate monoesters. Also has a phosphotransferase activity catalyzing the transfer of low-energy phosphate groups from organic phosphate monoesters to free hydroxyl groups of various organic compounds. The polypeptide is Class B acid phosphatase (Marinomonas sp. (strain MWYL1)).